A 1482-amino-acid chain; its full sequence is Chromosome partition protein MukB (1482 aa).

34 to 41 (GGNGAGKS) provides a ligand contact to ATP. 6 coiled-coil regions span residues 337–468 (LNLV…LSVA), 509–604 (QHLA…APIW), 780–805 (RAAR…ATLS), 835–1044 (EAEI…ELVD), 1070–1115 (TNRA…TAKA), and 1210–1265 (EAIE…LQAV). The flexible hinge stretch occupies residues 666–783 (PGGAEDQRLV…AVPLFGRAAR (118 aa)).

The protein belongs to the SMC family. MukB subfamily. As to quaternary structure, homodimerization via its hinge domain. Binds to DNA via its C-terminal region. Interacts, and probably forms a ternary complex, with MukE and MukF via its C-terminal region. The complex formation is stimulated by calcium or magnesium. Interacts with tubulin-related protein FtsZ.

The protein resides in the cytoplasm. It is found in the nucleoid. In terms of biological role, plays a central role in chromosome condensation, segregation and cell cycle progression. Functions as a homodimer, which is essential for chromosome partition. Involved in negative DNA supercoiling in vivo, and by this means organize and compact chromosomes. May achieve or facilitate chromosome segregation by condensation DNA from both sides of a centrally located replisome during cell division. In Serratia proteamaculans (strain 568), this protein is Chromosome partition protein MukB.